We begin with the raw amino-acid sequence, 332 residues long: Succinylglutamate desuccinylase (332 aa).

Residues His-59, Glu-62, and His-151 each contribute to the Zn(2+) site. Glu-215 is an active-site residue.

The protein belongs to the AspA/AstE family. Succinylglutamate desuccinylase subfamily. It depends on Zn(2+) as a cofactor.

The catalysed reaction is N-succinyl-L-glutamate + H2O = L-glutamate + succinate. The protein operates within amino-acid degradation; L-arginine degradation via AST pathway; L-glutamate and succinate from L-arginine: step 5/5. Functionally, transforms N(2)-succinylglutamate into succinate and glutamate. The chain is Succinylglutamate desuccinylase from Pseudomonas paraeruginosa (strain DSM 24068 / PA7) (Pseudomonas aeruginosa (strain PA7)).